The primary structure comprises 231 residues: 2-C-methyl-D-erythritol 4-phosphate cytidylyltransferase (231 aa).

The protein belongs to the IspD/TarI cytidylyltransferase family. IspD subfamily.

The catalysed reaction is 2-C-methyl-D-erythritol 4-phosphate + CTP + H(+) = 4-CDP-2-C-methyl-D-erythritol + diphosphate. Its pathway is isoprenoid biosynthesis; isopentenyl diphosphate biosynthesis via DXP pathway; isopentenyl diphosphate from 1-deoxy-D-xylulose 5-phosphate: step 2/6. Functionally, catalyzes the formation of 4-diphosphocytidyl-2-C-methyl-D-erythritol from CTP and 2-C-methyl-D-erythritol 4-phosphate (MEP). The sequence is that of 2-C-methyl-D-erythritol 4-phosphate cytidylyltransferase from Shewanella pealeana (strain ATCC 700345 / ANG-SQ1).